The following is a 137-amino-acid chain: Nucleoside diphosphate kinase (137 aa).

Lys-9, Phe-57, Arg-85, Thr-91, Arg-102, and Asn-112 together coordinate ATP. His-115 serves as the catalytic Pros-phosphohistidine intermediate.

This sequence belongs to the NDK family. Homotetramer. The cofactor is Mg(2+).

It localises to the cytoplasm. The enzyme catalyses a 2'-deoxyribonucleoside 5'-diphosphate + ATP = a 2'-deoxyribonucleoside 5'-triphosphate + ADP. It catalyses the reaction a ribonucleoside 5'-diphosphate + ATP = a ribonucleoside 5'-triphosphate + ADP. Functionally, major role in the synthesis of nucleoside triphosphates other than ATP. The ATP gamma phosphate is transferred to the NDP beta phosphate via a ping-pong mechanism, using a phosphorylated active-site intermediate. The polypeptide is Nucleoside diphosphate kinase (Campylobacter jejuni subsp. jejuni serotype O:23/36 (strain 81-176)).